The primary structure comprises 575 residues: Acyloxyacyl hydrolase (575 aa).

Positions 1 to 25 (MKSPWRILVVSPLLLLPLHSSTSRA) are cleaved as a signal peptide. Positions 26–34 (HDNQPGTIR) are excised as a propeptide. Residues 36–117 (DHYTCVGCVL…HTLEFCKQEP (82 aa)) enclose the Saposin B-type domain. Positions 37–69 (HYTCVGCVLVVSVIEQLAQVHNSTVQASMERLC) are important for enzyme activity, localization to cytoplasmic vesicles, and protein stability. Intrachain disulfides connect cysteine 40-cysteine 113, cysteine 43-cysteine 107, cysteine 69-cysteine 82, cysteine 122-cysteine 453, cysteine 159-cysteine 168, cysteine 205-cysteine 229, cysteine 248-cysteine 328, and cysteine 375-cysteine 459. Residue asparagine 58 is glycosylated (N-linked (GlcNAc...) asparagine). The lipopolysaccharide binding stretch occupies residues 172–176 (KLAIK). Ca(2+) contacts are provided by aspartate 183, aspartate 185, aspartate 187, tyrosine 189, aspartate 204, asparagine 206, aspartate 207, aspartate 209, valine 212, aspartate 222, aspartate 226, asparagine 228, asparagine 230, isoleucine 232, and glutamate 244. A glycan (N-linked (GlcNAc...) asparagine) is linked at asparagine 206. Serine 262 is an active-site residue. N-linked (GlcNAc...) asparagine glycosylation is present at asparagine 466.

Heterodimer of the large and small subunits; disulfide-linked. Ca(2+) is required as a cofactor. In terms of processing, cleaved into a large and a small subunit. Post-translationally, the small subunit is N-glycosylated.

The protein resides in the secreted. Its subcellular location is the cytoplasmic vesicle. It carries out the reaction a 3-(acyloxy)acyl derivative of bacterial toxin + H2O = a 3-hydroxyacyl derivative of bacterial toxin + a fatty acid + H(+). Its function is as follows. Removes the secondary (acyloxyacyl-linked) fatty acyl chains from the lipid A region of bacterial lipopolysaccharides (LPS). By breaking down LPS, terminates the host response to bacterial infection and prevents prolonged and damaging inflammatory responses. In peritoneal macrophages, seems to be important for recovery from a state of immune tolerance following infection by Gram-negative bacteria. The polypeptide is Acyloxyacyl hydrolase (Oryctolagus cuniculus (Rabbit)).